Here is a 282-residue protein sequence, read N- to C-terminus: 4-hydroxybenzoate octaprenyltransferase (282 aa).

The next 9 membrane-spanning stretches (helical) occupy residues 17–37, 40–60, 90–110, 113–133, 135–155, 163–183, 207–227, 231–251, and 262–282; these read IGILLLWYPTAWALWMANQGF, IDLLMIFLLGTVFMRSAGCVI, AFILLFILLCASLFLLLKLPI, FYFAVISVLITFLYPFCKRFF, APQLVLGLAFSMGIPMAFIAS, FIVLFLINFSWIIAYDTMYAM, LIIALLLIFLHSLWLVWAINK, CFFYLLWCTAAGILTYQLKLI, and AFLVSGYYGLVMWFAVGLALI.

Belongs to the UbiA prenyltransferase family. The cofactor is Mg(2+).

It is found in the cell inner membrane. It catalyses the reaction all-trans-octaprenyl diphosphate + 4-hydroxybenzoate = 4-hydroxy-3-(all-trans-octaprenyl)benzoate + diphosphate. It functions in the pathway cofactor biosynthesis; ubiquinone biosynthesis. In terms of biological role, catalyzes the prenylation of para-hydroxybenzoate (PHB) with an all-trans polyprenyl group. Mediates the second step in the final reaction sequence of ubiquinone-8 (UQ-8) biosynthesis, which is the condensation of the polyisoprenoid side chain with PHB, generating the first membrane-bound Q intermediate 3-octaprenyl-4-hydroxybenzoate. The protein is 4-hydroxybenzoate octaprenyltransferase of Legionella pneumophila (strain Lens).